Reading from the N-terminus, the 105-residue chain is Large ribosomal subunit protein uL24 (105 aa).

This sequence belongs to the universal ribosomal protein uL24 family. In terms of assembly, part of the 50S ribosomal subunit.

Its function is as follows. One of two assembly initiator proteins, it binds directly to the 5'-end of the 23S rRNA, where it nucleates assembly of the 50S subunit. One of the proteins that surrounds the polypeptide exit tunnel on the outside of the subunit. This chain is Large ribosomal subunit protein uL24, found in Mycobacterium avium (strain 104).